The chain runs to 429 residues: 3-phosphoshikimate 1-carboxyvinyltransferase (429 aa).

3 residues coordinate 3-phosphoshikimate: lysine 22, serine 23, and arginine 27. Lysine 22 contributes to the phosphoenolpyruvate binding site. The phosphoenolpyruvate site is built by glycine 94 and arginine 122. 4 residues coordinate 3-phosphoshikimate: serine 167, glutamine 169, aspartate 315, and lysine 342. Phosphoenolpyruvate is bound at residue glutamine 169. The active-site Proton acceptor is the aspartate 315. Phosphoenolpyruvate contacts are provided by arginine 346 and arginine 388.

This sequence belongs to the EPSP synthase family. Monomer.

The protein resides in the cytoplasm. It catalyses the reaction 3-phosphoshikimate + phosphoenolpyruvate = 5-O-(1-carboxyvinyl)-3-phosphoshikimate + phosphate. It functions in the pathway metabolic intermediate biosynthesis; chorismate biosynthesis; chorismate from D-erythrose 4-phosphate and phosphoenolpyruvate: step 6/7. Catalyzes the transfer of the enolpyruvyl moiety of phosphoenolpyruvate (PEP) to the 5-hydroxyl of shikimate-3-phosphate (S3P) to produce enolpyruvyl shikimate-3-phosphate and inorganic phosphate. The sequence is that of 3-phosphoshikimate 1-carboxyvinyltransferase from Geobacter sp. (strain M21).